Here is a 147-residue protein sequence, read N- to C-terminus: Epididymal secretory protein E3-beta (147 aa).

The signal sequence occupies residues methionine 1 to serine 25.

In terms of tissue distribution, epididymis.

It is found in the secreted. In terms of biological role, possible function in sperm maturation. The chain is Epididymal secretory protein E3-beta (EDDM3B) from Homo sapiens (Human).